A 339-amino-acid chain; its full sequence is FR-33289 synthase (339 aa).

Residues H150, D152, and H288 each contribute to the Fe(2+) site.

The protein belongs to the TfdA dioxygenase family. As to quaternary structure, homodimer. The cofactor is Fe(2+).

The enzyme catalyses 3-(N-acetyl-N-hydroxy)aminopropylphosphonate + 2-oxoglutarate + O2 = (R)-(3-(acetylhydroxyamino)-2-hydroxypropyl)phosphonate + succinate + CO2. The protein operates within antibiotic biosynthesis. In terms of biological role, monooxygenase involved in the biosynthesis of the phosphonate antibiotic FR-33289, an antimalarial agent. Catalyzes the oxidative decarboxylation of the antibiotic FR-900098 (3-(N-acetyl-N-hydroxy)aminopropylphosphonate) to form FR-33289 ((R)-(3-(acetylhydroxyamino)-2-hydroxypropyl)phosphonate). The protein is FR-33289 synthase of Streptomyces rubellomurinus (strain ATCC 31215).